Consider the following 255-residue polypeptide: Indole-3-glycerol phosphate synthase (255 aa).

Belongs to the TrpC family.

It catalyses the reaction 1-(2-carboxyphenylamino)-1-deoxy-D-ribulose 5-phosphate + H(+) = (1S,2R)-1-C-(indol-3-yl)glycerol 3-phosphate + CO2 + H2O. The protein operates within amino-acid biosynthesis; L-tryptophan biosynthesis; L-tryptophan from chorismate: step 4/5. This is Indole-3-glycerol phosphate synthase from Streptococcus thermophilus (strain ATCC BAA-250 / LMG 18311).